The chain runs to 169 residues: MSALLKPLDNRLFWPAVAIGGLLILAFVLYLQHVRGFAPCSLCIFIRLDVLGLVLAGIVGSLAPRSRIAGGIAALGMLAASLGGIYHAWSLVAEEKLAAQGMGSCKMFMGFPEWIPLDTWLPQVFQPEGLCGEVVWTLLGQSMAVWSLALFVFCLLVLAAKLAFGRRTA.

At 1–13 (MSALLKPLDNRLF) the chain is on the cytoplasmic side. Residues 14-30 (WPAVAIGGLLILAFVLY) form a helical membrane-spanning segment. Residues 31–48 (LQHVRGFAPCSLCIFIRL) are Periplasmic-facing. Cysteine 40 and cysteine 43 are disulfide-bonded. Residues 49–64 (DVLGLVLAGIVGSLAP) form a helical membrane-spanning segment. Residues 65 to 71 (RSRIAGG) lie on the Cytoplasmic side of the membrane. The chain crosses the membrane as a helical span at residues 72–89 (IAALGMLAASLGGIYHAW). The Periplasmic segment spans residues 90–145 (SLVAEEKLAAQGMGSCKMFMGFPEWIPLDTWLPQVFQPEGLCGEVVWTLLGQSMAV). Cysteine 105 and cysteine 131 form a disulfide bridge. A helical transmembrane segment spans residues 146–164 (WSLALFVFCLLVLAAKLAF). The Cytoplasmic portion of the chain corresponds to 165 to 169 (GRRTA).

Belongs to the DsbB family.

It is found in the cell inner membrane. In terms of biological role, required for disulfide bond formation in some periplasmic proteins. Acts by oxidizing the DsbA protein. This is Disulfide bond formation protein B 1 from Pseudomonas aeruginosa (strain UCBPP-PA14).